Consider the following 123-residue polypeptide: Small ribosomal subunit protein uS12cz/uS12cy (123 aa).

The protein belongs to the universal ribosomal protein uS12 family. Part of the 30S ribosomal subunit.

The protein localises to the plastid. The protein resides in the chloroplast. With S4 and S5 plays an important role in translational accuracy. Located at the interface of the 30S and 50S subunits. This is Small ribosomal subunit protein uS12cz/uS12cy (rps12-A) from Drimys granadensis.